Consider the following 99-residue polypeptide: Transcription factor 1 (99 aa).

May be involved in preference for HM-URA DNA regions lie at residues 52–77 (PVAR…SVGV) and 90–99 (EGLKYEDFAK). 2 consecutive DNA-binding regions follow at residues F61 and 93–94 (KY).

This sequence belongs to the bacterial histone-like protein family. As to quaternary structure, homodimer.

In terms of biological role, selectively binds to and inhibits the transcription of hydroxymethyluracil-(hmUra)-containing DNA, such as SP01 DNA, by RNA polymerase in vitro. This chain is Transcription factor 1 (TF1), found in Bacillus phage SP01 (Bacteriophage SP01).